We begin with the raw amino-acid sequence, 780 residues long: Phosphoenolpyruvate synthase (780 aa).

His-409 serves as the catalytic Tele-phosphohistidine intermediate. Residues Arg-499, Arg-566, Glu-668, Gly-689, Ser-690, Asn-691, and Asp-692 each coordinate substrate. A Mg(2+)-binding site is contributed by Glu-668. Asp-692 contributes to the Mg(2+) binding site.

This sequence belongs to the PEP-utilizing enzyme family. The cofactor is Mg(2+).

It carries out the reaction pyruvate + ATP + H2O = phosphoenolpyruvate + AMP + phosphate + 2 H(+). It participates in carbohydrate biosynthesis; gluconeogenesis. In terms of biological role, catalyzes the phosphorylation of pyruvate to phosphoenolpyruvate. The sequence is that of Phosphoenolpyruvate synthase (ppsA) from Deinococcus radiodurans (strain ATCC 13939 / DSM 20539 / JCM 16871 / CCUG 27074 / LMG 4051 / NBRC 15346 / NCIMB 9279 / VKM B-1422 / R1).